The primary structure comprises 235 residues: Urease accessory protein UreF (235 aa).

This sequence belongs to the UreF family. As to quaternary structure, ureD, UreF and UreG form a complex that acts as a GTP-hydrolysis-dependent molecular chaperone, activating the urease apoprotein by helping to assemble the nickel containing metallocenter of UreC. The UreE protein probably delivers the nickel.

It localises to the cytoplasm. In terms of biological role, required for maturation of urease via the functional incorporation of the urease nickel metallocenter. In Psychrobacter cryohalolentis (strain ATCC BAA-1226 / DSM 17306 / VKM B-2378 / K5), this protein is Urease accessory protein UreF.